We begin with the raw amino-acid sequence, 345 residues long: Phenylalanine--tRNA ligase alpha subunit (345 aa).

E262 contributes to the Mg(2+) binding site.

It belongs to the class-II aminoacyl-tRNA synthetase family. Phe-tRNA synthetase alpha subunit type 1 subfamily. Tetramer of two alpha and two beta subunits. Mg(2+) is required as a cofactor.

The protein localises to the cytoplasm. The enzyme catalyses tRNA(Phe) + L-phenylalanine + ATP = L-phenylalanyl-tRNA(Phe) + AMP + diphosphate + H(+). The sequence is that of Phenylalanine--tRNA ligase alpha subunit from Ehrlichia canis (strain Jake).